The following is a 227-amino-acid chain: Cytidylate kinase (227 aa).

11 to 19 (GPSGAGKGT) contributes to the ATP binding site.

Belongs to the cytidylate kinase family. Type 1 subfamily.

Its subcellular location is the cytoplasm. The catalysed reaction is CMP + ATP = CDP + ADP. The enzyme catalyses dCMP + ATP = dCDP + ADP. This is Cytidylate kinase from Pasteurella multocida (strain Pm70).